Reading from the N-terminus, the 425-residue chain is UDP-N-acetylglucosamine 1-carboxyvinyltransferase (425 aa).

Residue Lys-22–Asn-23 coordinates phosphoenolpyruvate. UDP-N-acetyl-alpha-D-glucosamine is bound at residue Arg-93. The active-site Proton donor is Cys-117. Residue Cys-117 is modified to 2-(S-cysteinyl)pyruvic acid O-phosphothioketal. UDP-N-acetyl-alpha-D-glucosamine-binding positions include Arg-122 to Leu-126, Asp-307, and Val-329.

Belongs to the EPSP synthase family. MurA subfamily.

Its subcellular location is the cytoplasm. The catalysed reaction is phosphoenolpyruvate + UDP-N-acetyl-alpha-D-glucosamine = UDP-N-acetyl-3-O-(1-carboxyvinyl)-alpha-D-glucosamine + phosphate. The protein operates within cell wall biogenesis; peptidoglycan biosynthesis. In terms of biological role, cell wall formation. Adds enolpyruvyl to UDP-N-acetylglucosamine. The polypeptide is UDP-N-acetylglucosamine 1-carboxyvinyltransferase (Prosthecochloris aestuarii (strain DSM 271 / SK 413)).